A 290-amino-acid polypeptide reads, in one-letter code: METPLDVLSRAASLVHADDEKREAALRGEPRIQTLPVASALSSHRTGPPPISPSKRKFSMEPGDEDLDCDNDHVSKMSRIFNPHLNKTANGDCRRDPRERSRSPIERAVAPTMSLHGSHLYTSLPSLGLEQPLALTKNSLDASRPAGLSPTLTPGERQQNRPSVITCASAGARNCNLSHCPIAHSGCAAPGPASYRRPPSAATTCDPVVEEHFRRSLGKNYKEPEPAPNSVSITGSVDDHFAKALGDTWLQIKAAKDGASSSPESASRRGQPASPSAHMVSHSHSPSVVS.

The residue at position 1 (Met1) is an N-acetylmethionine. Basic and acidic residues predominate over residues 17–30; it reads ADDEKREAALRGEP. 4 disordered regions span residues 17–65, 85–106, 140–161, and 254–290; these read ADDE…PGDE, LNKT…SPIE, LDAS…QQNR, and AAKD…SVVS. Ser52 carries the post-translational modification Phosphoserine. The span at 92–105 shows a compositional bias: basic and acidic residues; sequence DCRRDPRERSRSPI. A Phosphoserine modification is found at Ser149. Polar residues predominate over residues 150–161; the sequence is PTLTPGERQQNR. Thr153 carries the post-translational modification Phosphothreonine. A compositionally biased stretch (low complexity) spans 272–290; that stretch reads PASPSAHMVSHSHSPSVVS. Ser274 carries the phosphoserine modification.

Belongs to the vestigial family. In terms of assembly, interacts with TEFs. Interacts with IRF2BP2.

The protein localises to the nucleus. Functionally, may act as a specific coactivator for the mammalian TEFs. This is Transcription cofactor vestigial-like protein 4 from Homo sapiens (Human).